Consider the following 320-residue polypeptide: mRNA decay activator protein ZFP36 (320 aa).

The necessary for nuclear export stretch occupies residues M1–H15. The necessary and sufficient for the association with mRNA decay enzymes and mRNA decay activation stretch occupies residues M1 to T93. Necessary for localization of ARE-containing mRNAs to processing bodies (PBs) regions lie at residues M1–L167 and T93–E320. The interval L17–R50 is disordered. A compositionally biased stretch (polar residues) spans S27 to R50. The residue at position 53 (S53) is a Phosphoserine; by MAPKAPK2. Phosphoserine is present on S59. Residues P64–G68 form a P-P-P-P-G repeat. Residues P66–T85 show a composition bias toward pro residues. Residues P66–S95 are disordered. Phosphoserine occurs at positions 81 and 83. Residue T85 is modified to Phosphothreonine. Phosphoserine is present on S86. The span at S86–S95 shows a compositional bias: low complexity. The necessary for nuclear localization stretch occupies residues T88–P161. The necessary for RNA-binding stretch occupies residues T90–A166. C3H1-type zinc fingers lie at residues R96–G124 and K134–T162. Positions R96–R187 are necessary for interaction with PABPN1. A necessary for mRNA decay activation region spans residues L167–E320. S179 bears the Phosphoserine; by MAPKAPK2 mark. A disordered region spans residues F180–L310. At S190 the chain carries Phosphoserine. Residues P191–G195 form a P-P-P-P-G repeat. Residues S197–S209 are compositionally biased toward low complexity. S211 is modified (phosphoserine). The P-P-P-P-G repeat unit spans residues P212–G216. S221 is subject to Phosphoserine; by MAPK1; in vitro. T251 is modified (phosphothreonine). Phosphoserine occurs at positions 270 and 290. The span at S280–S290 shows a compositional bias: low complexity. Residues P300–R309 show a composition bias toward pro residues. The interval P306–E320 is interaction with CNOT1. Position 317 is a phosphoserine (S317).

In terms of assembly, associates with cytoplasmic CCR4-NOT and PAN2-PAN3 deadenylase complexes to trigger ARE-containing mRNA deadenylation and decay processes. Part of a mRNA decay activation complex at least composed of poly(A)-specific exoribonucleases CNOT6, EXOSC2 and XRN1 and mRNA-decapping enzymes DCP1A and DCP2. Associates with the RNA exosome complex. Interacts (via phosphorylated form) with 14-3-3 proteins; these interactions promote exclusion of ZFP36 from cytoplasmic stress granules in response to arsenite treatment in a MAPKAPK2-dependent manner and does not prevent CCR4-NOT deadenylase complex recruitment or ZFP36-induced ARE-containing mRNA deadenylation and decay processes. Interacts with 14-3-3 proteins; these interactions occur in response to rapamycin in an Akt-dependent manner. Interacts with AGO2 and AGO4. Interacts (via C-terminus) with CNOT1; this interaction occurs in a RNA-independent manner and induces mRNA deadenylation. Interacts (via N-terminus) with CNOT6. Interacts with CNOT6L. Interacts (via C-terminus) with CNOT7; this interaction occurs in a RNA-independent manner, induces mRNA deadenylation and is inhibited in a phosphorylation MAPKAPK2-dependent manner. Interacts (via unphosphorylated form) with CNOT8; this interaction occurs in a RNA-independent manner and is inhibited in a phosphorylation MAPKAPK2-dependent manner. Interacts with DCP1A. Interacts (via N-terminus) with DCP2. Interacts with EDC3. Interacts (via N-terminus) with EXOSC2. Interacts with heat shock 70 kDa proteins. Interacts with KHSRP; this interaction increases upon cytokine-induced treatment. Interacts with MAP3K4; this interaction enhances the association with SH3KBP1/CIN85. Interacts with MAPKAPK2; this interaction occurs upon skeletal muscle satellite cell activation. Interacts with NCL. Interacts with NUP214; this interaction increases upon lipopolysaccharide (LPS) stimulation. Interacts with PABPC1; this interaction occurs in a RNA-dependent manner. Interacts (via hypophosphorylated form) with PABPN1 (via RRM domain and C-terminal arginine-rich region); this interaction occurs in the nucleus in a RNA-independent manner, decreases in presence of single-stranded poly(A) RNA-oligomer and in a p38 MAPK-dependent-manner and inhibits nuclear poly(A) tail synthesis. Interacts with PAN2. Interacts (via C3H1-type zinc finger domains) with PKM. Interacts (via C3H1-type zinc finger domains) with nuclear RNA poly(A) polymerase. Interacts with PPP2CA; this interaction occurs in LPS-stimulated cells and induces ZFP36 dephosphorylation, and hence may promote ARE-containing mRNAs decay. Interacts (via C-terminus) with PRR5L (via C-terminus); this interaction may accelerate ZFP36-mediated mRNA decay during stress. Interacts (via C-terminus) with SFN; this interaction occurs in a phosphorylation-dependent manner. Interacts (via extreme C-terminal region) with SH3KBP1/CIN85 (via SH3 domains); this interaction enhances MAP3K4-induced phosphorylation of ZFP36 at Ser-59 and Ser-86 and does not alter neither ZFP36 binding to ARE-containing transcripts nor TNF-alpha mRNA decay. Interacts with XRN1. Interacts (via C-terminus and Ser-179 phosphorylated form) with YWHAB; this interaction occurs in a p38/MAPKAPK2-dependent manner, increases cytoplasmic localization of ZFP36 and protects ZFP36 from Ser-179 dephosphorylation by serine/threonine phosphatase 2A, and hence may be crucial for stabilizing ARE-containing mRNAs. Interacts (via phosphorylated form) with YWHAE. Interacts (via C-terminus) with YWHAG; this interaction occurs in a phosphorylation-dependent manner. Interacts with YWHAH; this interaction occurs in a phosphorylation-dependent manner. Interacts with YWHAQ; this interaction occurs in a phosphorylation-dependent manner. Interacts with (via C-terminus) YWHAZ; this interaction occurs in a phosphorylation-dependent manner. Does not interact with SH3KBP1. Interacts (via P-P-P-P-G repeats) with GIGYF2; the interaction is direct. Phosphorylated. Phosphorylation at serine and/or threonine residues occurs in a p38 MAPK- and MAPKAPK2-dependent manner. Phosphorylated by MAPKAPK2 at Ser-53 and Ser-179; phosphorylation increases its stability and cytoplasmic localization, promotes binding to 14-3-3 adapter proteins and inhibits the recruitment of cytoplasmic CCR4-NOT and PAN2-PAN3 deadenylase complexes to the mRNA decay machinery, thereby inhibiting ZFP36-induced ARE-containing mRNA deadenylation and decay processes. Phosphorylation by MAPKAPK2 does not impair ARE-containing RNA-binding. Phosphorylated in a MAPKAPK2- and p38 MAPK-dependent manner upon skeletal muscle satellite cell activation; this phosphorylation inhibits ZFP36-mediated mRNA decay activity, and hence stabilizes MYOD1 mRNA. Phosphorylated by MAPK1 upon mitogen stimulation. Phosphorylated at Ser-59 and Ser-86; these phosphorylations increase in a SH3KBP1-dependent manner. Phosphorylated at serine and threonine residues in a pyruvate kinase PKM- and p38 MAPK-dependent manner. Phosphorylation at Ser-53 may participate in the PKM-mediated degradation of ZFP36 in a p38 MAPK-dependent manner. Dephosphorylated by serine/threonine phosphatase 2A at Ser-179. Post-translationally, ubiquitinated; pyruvate kinase (PKM)-dependent ubiquitination leads to proteasomal degradation through a p38 MAPK signaling pathway.

Its subcellular location is the nucleus. It is found in the cytoplasm. The protein localises to the cytoplasmic granule. The protein resides in the P-body. Functionally, zinc-finger RNA-binding protein that destabilizes numerous cytoplasmic AU-rich element (ARE)-containing mRNA transcripts by promoting their poly(A) tail removal or deadenylation, and hence provide a mechanism for attenuating protein synthesis. Acts as an 3'-untranslated region (UTR) ARE mRNA-binding adapter protein to communicate signaling events to the mRNA decay machinery. Recruits deadenylase CNOT7 (and probably the CCR4-NOT complex) via association with CNOT1, and hence promotes ARE-mediated mRNA deadenylation. Also functions by recruiting components of the cytoplasmic RNA decay machinery to the bound ARE-containing mRNAs. Self regulates by destabilizing its own mRNA. Binds to 3'-UTR ARE of numerous mRNAs. Also binds to ARE of its own mRNA. Plays a role in anti-inflammatory responses; suppresses tumor necrosis factor (TNF)-alpha production by stimulating ARE-mediated TNF-alpha mRNA decay and several other inflammatory ARE-containing mRNAs in interferon (IFN)- and/or lipopolysaccharide (LPS)-induced macrophages. Also plays a role in the regulation of dendritic cell maturation at the post-transcriptional level, and hence operates as part of a negative feedback loop to limit the inflammatory response. Promotes ARE-mediated mRNA decay of hypoxia-inducible factor HIF1A mRNA during the response of endothelial cells to hypoxia. Positively regulates early adipogenesis of preadipocytes by promoting ARE-mediated mRNA decay of immediate early genes (IEGs). Negatively regulates hematopoietic/erythroid cell differentiation by promoting ARE-mediated mRNA decay of the transcription factor STAT5B mRNA. Plays a role in maintaining skeletal muscle satellite cell quiescence by promoting ARE-mediated mRNA decay of the myogenic determination factor MYOD1 mRNA. Also associates with and regulates the expression of non-ARE-containing target mRNAs at the post-transcriptional level, such as MHC class I mRNAs. Participates in association with argonaute RISC catalytic components in the ARE-mediated mRNA decay mechanism; assists microRNA (miRNA) targeting ARE-containing mRNAs. May also play a role in the regulation of cytoplasmic mRNA decapping; enhances decapping of ARE-containing RNAs, in vitro. Involved in the delivery of target ARE-mRNAs to processing bodies (PBs). In addition to its cytosolic mRNA-decay function, affects nuclear pre-mRNA processing. Negatively regulates nuclear poly(A)-binding protein PABPN1-stimulated polyadenylation activity on ARE-containing pre-mRNA during LPS-stimulated macrophages. Also involved in the regulation of stress granule (SG) and P-body (PB) formation and fusion. Plays a role in the regulation of keratinocyte proliferation, differentiation and apoptosis. Plays a role as a tumor suppressor by inhibiting cell proliferation in breast cancer cells. This is mRNA decay activator protein ZFP36 from Rattus norvegicus (Rat).